Here is a 73-residue protein sequence, read N- to C-terminus: MGSKCCKTIHGGIFSKAEDTLVDYKGKYINLEKEFSALSDTESEEELQLEKPLLNKQDSSVSLTQKKLENQSK.

Gly2 carries the N-myristoyl glycine; by host lipid modification.

The protein belongs to the herpesviridae cytoplasmic envelopment protein 3 family. In terms of assembly, interacts with cytoplasmic envelopment protein 2; this interaction is essential for the proper localization of each protein to the assembly complex and thus for the production of infectious virus. Post-translationally, myristoylation and palmitoylation (probably on one or more of the nearby cysteines at the N-terminus) enable membrane-binding and Golgi apparatus-specific targeting and are essential for efficient packaging. In terms of processing, phosphorylated. Phosphorylation does not seem to be required for recycling to the host Golgi apparatus. Packaging is selective for underphosphorylated forms.

It is found in the virion tegument. Its subcellular location is the virion membrane. The protein localises to the host cell membrane. The protein resides in the host Golgi apparatus membrane. Functionally, plays an important role in the cytoplasmic envelopment of tegument proteins and capsids during the assembly and egress processes. Also participates in viral entry at the fusion step probably by regulating the core fusion machinery. This Homo sapiens (Human) protein is Cytoplasmic envelopment protein 3 (U71).